A 99-amino-acid polypeptide reads, in one-letter code: Small ribosomal subunit protein uS14m (99 aa).

It belongs to the universal ribosomal protein uS14 family.

It localises to the mitochondrion. The polypeptide is Small ribosomal subunit protein uS14m (RPS14) (Oenothera berteroana (Bertero's evening primrose)).